The chain runs to 741 residues: Transketolase, chloroplastic (741 aa).

Low complexity predominate over residues 1–19; sequence MAASSSLSTLSHHQTLLSH. Residues 1–33 form a disordered region; the sequence is MAASSSLSTLSHHQTLLSHPKTHLPTTPASSLL. The transit peptide at 1–66 directs the protein to the chloroplast; the sequence is MAASSSLSTL…VGSASAVVRA (66 aa). Residues 24 to 33 are compositionally biased toward polar residues; the sequence is LPTTPASSLL. His-103 provides a ligand contact to substrate. Thiamine diphosphate is bound by residues His-143 and 192 to 194; that span reads GPL. Asp-233 contributes to the Mg(2+) binding site. Residues Gly-234 and Asn-263 each coordinate thiamine diphosphate. Mg(2+)-binding residues include Asn-263 and Ile-265. Substrate is bound by residues His-340, Arg-434, and Ser-461. His-340 lines the thiamine diphosphate pocket. Positions 488 and 515 each coordinate thiamine diphosphate. Catalysis depends on Glu-488, which acts as the Proton donor. Substrate is bound by residues His-539, Asp-547, and Arg-598.

Belongs to the transketolase family. As to quaternary structure, homodimer. Mg(2+) is required as a cofactor. Ca(2+) serves as cofactor. The cofactor is Mn(2+). It depends on Co(2+) as a cofactor. Requires thiamine diphosphate as cofactor.

Its subcellular location is the plastid. The protein resides in the chloroplast thylakoid membrane. It catalyses the reaction D-sedoheptulose 7-phosphate + D-glyceraldehyde 3-phosphate = aldehydo-D-ribose 5-phosphate + D-xylulose 5-phosphate. Its pathway is carbohydrate biosynthesis; Calvin cycle. Functionally, catalyzes the reversible transfer of a two-carbon ketol group from fructose-6-phosphate or sedoheptulose-7-phosphate to glyceraldehyde-3-phosphate to yield xylulose-5-phosphate and erythrose-4-phosphate or ribose-5-phosphate, respectively. The chain is Transketolase, chloroplastic from Spinacia oleracea (Spinach).